A 273-amino-acid polypeptide reads, in one-letter code: Pyridoxal phosphate homeostasis protein (273 aa).

Serine 6 carries the post-translational modification Phosphoserine. At lysine 47 the chain carries N6-(pyridoxal phosphate)lysine. Phosphotyrosine is present on tyrosine 69. Lysine 125 carries the post-translational modification N6-succinyllysine. Phosphoserine is present on residues serine 226 and serine 244. Basic and acidic residues predominate over residues 251–260; the sequence is DYSKKTDKPA. The interval 251–273 is disordered; that stretch reads DYSKKTDKPAAELQAPEEVAQAH.

Belongs to the pyridoxal phosphate-binding protein YggS/PROSC family.

In terms of biological role, pyridoxal 5'-phosphate (PLP)-binding protein, which may be involved in intracellular homeostatic regulation of pyridoxal 5'-phosphate (PLP), the active form of vitamin B6. This Bos taurus (Bovine) protein is Pyridoxal phosphate homeostasis protein.